Consider the following 449-residue polypeptide: Phosphoglucosamine mutase (449 aa).

Serine 100 serves as the catalytic Phosphoserine intermediate. Mg(2+) contacts are provided by serine 100, aspartate 241, aspartate 243, and aspartate 245. A Phosphoserine modification is found at serine 100.

The protein belongs to the phosphohexose mutase family. Requires Mg(2+) as cofactor. In terms of processing, activated by phosphorylation.

The catalysed reaction is alpha-D-glucosamine 1-phosphate = D-glucosamine 6-phosphate. Its function is as follows. Catalyzes the conversion of glucosamine-6-phosphate to glucosamine-1-phosphate. The polypeptide is Phosphoglucosamine mutase (Geobacillus kaustophilus (strain HTA426)).